The chain runs to 398 residues: Serpin-Z2A (398 aa).

The tract at residues 343–367 (GTEAAAATIAKAVLLSASPPSDMDF) is RCL.

It belongs to the serpin family.

Inhibits chymotrypsin and cathepsin G in vitro. In Triticum aestivum (Wheat), this protein is Serpin-Z2A.